The chain runs to 371 residues: Alanine dehydrogenase (371 aa).

Positions 15 and 75 each coordinate substrate. Histidine 96 acts as the Proton donor/acceptor in catalysis. NAD(+)-binding positions include serine 134, 178-179, aspartate 198, lysine 203, serine 220, 239-240, 267-270, arginine 279, and 298-301; these read TA, VL, IAID, and VANM. Aspartate 270 serves as the catalytic Proton donor/acceptor. The Mg(2+) site is built by glutamate 323 and histidine 327.

Belongs to the AlaDH/PNT family. Homohexamer. Trimer of dimers. It depends on Mg(2+) as a cofactor.

It localises to the secreted. The catalysed reaction is L-alanine + NAD(+) + H2O = pyruvate + NH4(+) + NADH + H(+). It functions in the pathway amino-acid degradation; L-alanine degradation via dehydrogenase pathway; NH(3) and pyruvate from L-alanine: step 1/1. Its function is as follows. Catalyzes the reversible reductive amination of pyruvate to L-alanine. However, since the physiological environment of M.tuberculosis has a neutral pH, it can be assumed that the enzyme catalyzes exclusively the formation of L-alanine. May play a role in cell wall synthesis as L-alanine is an important constituent of the peptidoglycan layer. The sequence is that of Alanine dehydrogenase (ald) from Mycobacterium tuberculosis (strain CDC 1551 / Oshkosh).